We begin with the raw amino-acid sequence, 230 residues long: MLLHIPTILSRTHATSMQERLAAANWTDGRETVGPQGAQVKHNLQLPETSPLRQELGQEILDALARSPLYFAATLPLRTLPPRFNRYQENHQYGFHVDGAVMSLPVAPDHTPASLRSDISCTLFLNDPDEYEGGELIIADTYGEHEVKLPAGDLIIYPSTSLHRVAPVTRGMRIASFFWVQSLVRQATHRHQLLELDTAIQSLTASNTDHNTILRLTNVYHNLLREWSET.

The Fe2OG dioxygenase domain occupies 78 to 182; it reads RTLPPRFNRY…RIASFFWVQS (105 aa). The Fe cation site is built by histidine 96, aspartate 98, and histidine 163. Arginine 173 contacts 2-oxoglutarate.

Fe(2+) is required as a cofactor. L-ascorbate serves as cofactor.

In Xylella fastidiosa (strain Temecula1 / ATCC 700964), this protein is PKHD-type hydroxylase PD_1553.